The sequence spans 373 residues: StAR-related lipid transfer protein 7, mitochondrial (373 aa).

A mitochondrion-targeting transit peptide spans methionine 1–leucine 61. The stretch at aspartate 89–isoleucine 114 forms a coiled coil. The 216-residue stretch at phenylalanine 115–asparagine 330 folds into the START domain. Disordered stretches follow at residues serine 118–glutamate 141 and serine 347–alanine 373.

Post-translationally, proteolytically cleaved by PARL. As to expression, expressed in epithelial cells of airways, peripheral bronchioles and alveoli, as well as in the basal cell layer of the epidermis (at protein level).

Its subcellular location is the mitochondrion. May play a protective role in mucosal tissues by preventing exaggerated allergic responses. The sequence is that of StAR-related lipid transfer protein 7, mitochondrial (Stard7) from Mus musculus (Mouse).